The primary structure comprises 236 residues: 2,3,4,5-tetrahydropyridine-2,6-dicarboxylate N-acetyltransferase (236 aa).

The protein belongs to the transferase hexapeptide repeat family. DapH subfamily.

It catalyses the reaction (S)-2,3,4,5-tetrahydrodipicolinate + acetyl-CoA + H2O = L-2-acetamido-6-oxoheptanedioate + CoA. It functions in the pathway amino-acid biosynthesis; L-lysine biosynthesis via DAP pathway; LL-2,6-diaminopimelate from (S)-tetrahydrodipicolinate (acetylase route): step 1/3. Its function is as follows. Catalyzes the transfer of an acetyl group from acetyl-CoA to tetrahydrodipicolinate. The polypeptide is 2,3,4,5-tetrahydropyridine-2,6-dicarboxylate N-acetyltransferase (Clostridium perfringens (strain ATCC 13124 / DSM 756 / JCM 1290 / NCIMB 6125 / NCTC 8237 / Type A)).